A 90-amino-acid chain; its full sequence is Cell division topological specificity factor (90 aa).

The tract at residues 1-21 (MAGFWSKIFGNDEKPSSAQTA) is disordered. Over residues 10–21 (GNDEKPSSAQTA) the composition is skewed to basic and acidic residues.

It belongs to the MinE family.

In terms of biological role, prevents the cell division inhibition by proteins MinC and MinD at internal division sites while permitting inhibition at polar sites. This ensures cell division at the proper site by restricting the formation of a division septum at the midpoint of the long axis of the cell. The polypeptide is Cell division topological specificity factor (Acinetobacter baylyi (strain ATCC 33305 / BD413 / ADP1)).